Consider the following 431-residue polypeptide: 23S rRNA (uracil(1939)-C(5))-methyltransferase RlmD (431 aa).

The 59-residue stretch at 10–68 (RVTTRQIITVKVNDLDSFGQGVARHNGKALFIPGLLPEESAEVIITEDKKQFARARVSR) folds into the TRAM domain. Positions 81, 87, 90, and 161 each coordinate [4Fe-4S] cluster. S-adenosyl-L-methionine contacts are provided by Gln-264, Phe-293, Asn-298, Glu-314, Asn-341, and Asp-362. The active-site Nucleophile is Cys-388.

The protein belongs to the class I-like SAM-binding methyltransferase superfamily. RNA M5U methyltransferase family. RlmD subfamily.

It catalyses the reaction uridine(1939) in 23S rRNA + S-adenosyl-L-methionine = 5-methyluridine(1939) in 23S rRNA + S-adenosyl-L-homocysteine + H(+). Its function is as follows. Catalyzes the formation of 5-methyl-uridine at position 1939 (m5U1939) in 23S rRNA. This Salmonella choleraesuis (strain SC-B67) protein is 23S rRNA (uracil(1939)-C(5))-methyltransferase RlmD.